We begin with the raw amino-acid sequence, 402 residues long: UPF0261 protein BPP1817 (402 aa).

Belongs to the UPF0261 family.

The polypeptide is UPF0261 protein BPP1817 (Bordetella parapertussis (strain 12822 / ATCC BAA-587 / NCTC 13253)).